We begin with the raw amino-acid sequence, 510 residues long: Pyruvate kinase, cytosolic isozyme (510 aa).

R50 is a substrate binding site. Positions 52, 54, 84, and 85 each coordinate K(+). 52–55 (NFSH) contacts ATP. 2 residues coordinate ATP: R91 and K176. E242 provides a ligand contact to Mg(2+). 3 residues coordinate substrate: G265, D266, and T298. Mg(2+) is bound at residue D266.

This sequence belongs to the pyruvate kinase family. In terms of assembly, homotetramer. Mg(2+) serves as cofactor. K(+) is required as a cofactor.

The protein localises to the cytoplasm. It catalyses the reaction pyruvate + ATP = phosphoenolpyruvate + ADP + H(+). Its pathway is carbohydrate degradation; glycolysis; pyruvate from D-glyceraldehyde 3-phosphate: step 5/5. In Solanum tuberosum (Potato), this protein is Pyruvate kinase, cytosolic isozyme.